The primary structure comprises 297 residues: ATP phosphoribosyltransferase (297 aa).

M1 carries the post-translational modification N-acetylmethionine.

This sequence belongs to the ATP phosphoribosyltransferase family.

It is found in the cytoplasm. It catalyses the reaction 1-(5-phospho-beta-D-ribosyl)-ATP + diphosphate = 5-phospho-alpha-D-ribose 1-diphosphate + ATP. It participates in amino-acid biosynthesis; L-histidine biosynthesis; L-histidine from 5-phospho-alpha-D-ribose 1-diphosphate: step 1/9. Catalyzes the condensation of ATP and 5-phosphoribose 1-diphosphate to form N'-(5'-phosphoribosyl)-ATP (PR-ATP). Has a crucial role in the pathway because the rate of histidine biosynthesis seems to be controlled primarily by regulation of the enzymatic activity. This chain is ATP phosphoribosyltransferase (HIS1), found in Saccharomyces cerevisiae (strain ATCC 204508 / S288c) (Baker's yeast).